Consider the following 345-residue polypeptide: MPISPALAERIATSPKAELHIHIEGSLEPELMFALAERNGVKLPYASVDEVRAAYAFNDLQSFLDLYYAGASVLLTEQDFYDMTAAYVARAVADNVRHAEIFFDPQTHTARDVPMHVVIGGIVRALDDAERAHGFSSRLILCFLRHLSEADAFDTLEAALPYIQDPANRIIGVGLDSSERGNPPEKFARVFARCKALGLRLVAHAGEEGPAQYVIDALDILQVERIDHGVRAIDDAALVKRLAASRVALTVCPLSNEKLKVYPDLRDHSLKQLLDAGCAVTLHSDDPAYFGGYMNTNWLATFNALGLSAADAHTLARNSFEASFLPEQDKALWLNAVDIHWRAHT.

Residues H20, H22, and H204 each coordinate Zn(2+). Catalysis depends on E207, which acts as the Proton donor. D285 provides a ligand contact to Zn(2+). D286 contributes to the substrate binding site.

The protein belongs to the metallo-dependent hydrolases superfamily. Adenosine and AMP deaminases family. Adenine deaminase type 2 subfamily. It depends on Zn(2+) as a cofactor.

The catalysed reaction is adenine + H2O + H(+) = hypoxanthine + NH4(+). Its function is as follows. Catalyzes the hydrolytic deamination of adenine to hypoxanthine. Plays an important role in the purine salvage pathway and in nitrogen catabolism. The chain is Adenine deaminase from Ralstonia nicotianae (strain ATCC BAA-1114 / GMI1000) (Ralstonia solanacearum).